The following is a 62-amino-acid chain: Amolopin-P2 (62 aa).

The signal sequence occupies residues 1–22 (MFTLKKSLLLLFFLGTISLSLC). Residues 23–44 (EQERGADEEENGGEVTEQEVKR) constitute a propeptide that is removed on maturation.

Belongs to the frog skin active peptide (FSAP) family. Amolopin subfamily. In terms of tissue distribution, expressed by the skin glands.

It localises to the secreted. Antimicrobial peptide with activity against Gram-positive bacteria. Has been tested against S.aureus (MIC=37.5 ug/mL), against B.pumilus (MIC=75.0 ug/mL), B.cereus (no activity detected). Does not show activity against Gram-negative bacteria (E.coli, B.dysenteriae, A.calcoaceticus, P.aeruginosa) and fungi (C.albicans). Does not show hemolytic activity against rabbit erythrocytes. This Amolops loloensis (Lolokou Sucker Frog) protein is Amolopin-P2.